The following is a 155-amino-acid chain: Small ribosomal subunit protein bS16 (155 aa).

The disordered stretch occupies residues 100 to 155 (EAGIPDPAPSTEEPAAVCEASAEMAGQPGEVEPAGAAAEPNSQEPEPEEEKPQVEA). A compositionally biased stretch (low complexity) spans 124–143 (AGQPGEVEPAGAAAEPNSQE).

This sequence belongs to the bacterial ribosomal protein bS16 family.

This chain is Small ribosomal subunit protein bS16, found in Synechococcus sp. (strain JA-3-3Ab) (Cyanobacteria bacterium Yellowstone A-Prime).